The sequence spans 439 residues: Xylose isomerase (439 aa).

Catalysis depends on residues histidine 101 and aspartate 104. Glutamate 232, glutamate 268, histidine 271, aspartate 296, aspartate 307, aspartate 309, and aspartate 339 together coordinate Mg(2+).

This sequence belongs to the xylose isomerase family. Homotetramer. The cofactor is Mg(2+).

Its subcellular location is the cytoplasm. It catalyses the reaction alpha-D-xylose = alpha-D-xylulofuranose. The chain is Xylose isomerase from Yersinia pestis bv. Antiqua (strain Angola).